Consider the following 232-residue polypeptide: C4-dicarboxylate TRAP transporter small permease protein DctQ (232 aa).

4 helical membrane passes run 30–50, 58–78, 103–123, and 167–187; these read EFLI…NVIM, ILWA…VGAS, LYAL…LIGS, and FIPY…FLQI.

Belongs to the TRAP transporter small permease family. As to quaternary structure, the complex comprises the extracytoplasmic solute receptor protein DctP, and the two transmembrane proteins DctQ and DctM.

The protein localises to the cell inner membrane. Its function is as follows. Part of the tripartite ATP-independent periplasmic (TRAP) transport system DctPQM involved in C4-dicarboxylates uptake. This is C4-dicarboxylate TRAP transporter small permease protein DctQ from Vibrio cholerae serotype O1 (strain ATCC 39315 / El Tor Inaba N16961).